The following is a 217-amino-acid chain: Eukaryotic translation initiation factor 4E (217 aa).

Residues 1–30 (MATVEPETTPTPNPPTTEEEKTESNQEVAN) are disordered. N-acetylalanine is present on alanine 2. Threonine 22 is modified (phosphothreonine). The tract at residues 37–40 (HPLQ) is EIF4EBP1/2/3 binding. 56 to 57 (WQ) contacts mRNA. The interval 73 to 77 (WALYN) is EIF4EBP1/2/3 binding. 102-103 (WE) is a binding site for mRNA. An EIF4EBP1/2/3 binding region spans residues 132–139 (ETLLCLIG). MRNA contacts are provided by residues 157–162 (RAKGDK) and 205–207 (TKS). Phosphoserine; by PKC and MKNK2 is present on serine 209.

Belongs to the eukaryotic initiation factor 4E family. In terms of assembly, eIF4F is a multi-subunit complex, the composition of which varies with external and internal environmental conditions. It is composed of at least EIF4A, EIF4E and EIF4G1/EIF4G3. EIF4E is also known to interact with other partners. Interacts with EIF4ENIF1/4E-T; promotes recruitment to P-bodies and import into the nucleus. Hypophosphorylated EIF4EBP1, EIF4EBP2 and EIF4EBP3 compete with EIF4G1/EIF4G3 to interact with EIF4E; insulin stimulated MAP-kinase (MAPK1 and MAPK3) phosphorylation of EIF4EBP1 causes dissociation of the complex allowing EIF4G1/EIF4G3 to bind and consequent initiation of translation. Interacts mutually exclusive with EIF4A1 or EIF4A2. Interacts with NGDN and PIWIL2. Component of the CYFIP1-EIF4E-FMR1 complex composed of CYFIP, EIF4E and FMR1. Interacts directly with CYFIP1. Interacts with CLOCK. Binds to MKNK2 in nucleus. Interacts with LIMD1, WTIP and AJUBA. Interacts with APOBEC3G in an RNA-dependent manner. Interacts with LARP1. Interacts with METTL3. Interacts with RBM24; this interaction prevents EIF4E from binding to p53/TP53 mRNA and inhibits the assembly of translation initiation complex. Interacts with DDX3X; interaction is direct and in an RNA-independent manner; this interaction enhances EIF4E cap-binding ability and is required for the repression of cap-dependent translation and the increase of IRES-mediated translation. DDX3X competes with EIF4G1 for interaction with EIF4E. Interacts with EIF4G1; which in a mutual exclusive interaction associates either with EIF1 or with EIF4E on a common binding site. Interacts with BTG4 and CNOT7. Interacts with LRPPRC (via N-terminus); the interaction promotes association of EIF4E with 4ESE-containing mRNAs. Interacts with mRNA cleavage enzyme CPSF3 and its cofactor CPSF1. Interacts (via RING-type zinc finger) with PML; the interaction results in conformational changes of both interacting proteins and reduces EIF4E affinity for the 5' m7G cap of mRNA, thus reducing EIF4E-mediated mRNA nuclear export. Interacts with homeobox protein HHEX/PRH; the interaction inhibits EIF4E-mediated mRNA nuclear export. Interacts with homeobox protein HOXA9; the interaction positively regulates EIF4E-mediated mRNA nuclear export. Interacts with homeobox protein EMX2. As to quaternary structure, (Microbial infection) Interacts with Lassa virus Z protein. (Microbial infection) Interacts with Lymphocytic choriomeningitis virus (LCMV) Z protein (via RING-type zinc finger); the interaction results in conformational changes of both interacting proteins and reduces EIF4E affinity for the m7G mRNA cap structure. In terms of assembly, (Microbial infection) Interacts (via cap-binding region) with potato virus Y VPg; this interaction mediates the translation of the VPg-viral RNA conjugates and interferes with the cellular EIF4E-dependent mRNA export and translation. Phosphorylation increases the ability of the protein to bind to mRNA caps and to form the eIF4F complex. Phosphorylation also enhances its mRNA transport function. Phosphorylation at Ser-209 is not essential for protein synthesis.

It localises to the cytoplasm. It is found in the P-body. Its subcellular location is the stress granule. The protein resides in the nucleus. The protein localises to the nucleus speckle. It localises to the nuclear body. Functionally, acts in the cytoplasm to initiate and regulate protein synthesis and is required in the nucleus for export of a subset of mRNAs from the nucleus to the cytoplasm which promotes processes such as RNA capping, processing and splicing. Component of the protein complex eIF4F, which is involved in the recognition of the mRNA cap, ATP-dependent unwinding of 5'-terminal secondary structure and recruitment of mRNA to the ribosome. This protein recognizes and binds the 7-methylguanosine (m7G)-containing mRNA cap during an early step in the initiation of protein synthesis and facilitates ribosome binding by inducing the unwinding of the mRNAs secondary structures. Together with EIF4G1, antagonizes the scanning promoted by EIF1-EIF4G1 and is required for TISU translation, a process where the TISU element recognition makes scanning unnecessary. In addition to its role in translation initiation, also acts as a regulator of translation and stability in the cytoplasm. Component of the CYFIP1-EIF4E-FMR1 complex which binds to the mRNA cap and mediates translational repression: in the complex, EIF4E mediates the binding to the mRNA cap. Component of a multiprotein complex that sequesters and represses translation of proneurogenic factors during neurogenesis. In P-bodies, component of a complex that mediates the storage of translationally inactive mRNAs in the cytoplasm and prevents their degradation. May play an important role in spermatogenesis through translational regulation of stage-specific mRNAs during germ cell development. As well as its roles in translation, also involved in mRNA nucleocytoplasmic transport. Its role in mRNA export from the nucleus to the cytoplasm relies on its ability to bind the m7G cap of RNAs and on the presence of the 50-nucleotide EIF4E sensitivity element (4ESE) in the 3'UTR of sensitive transcripts. Interaction with the 4ESE is mediated by LRPPRC which binds simultaneously to both EIF4E and the 4ESE, thereby acting as a platform for assembly for the RNA export complex. EIF4E-dependent mRNA export is independent of ongoing protein or RNA synthesis and is also NFX1-independent but is XPO1-dependent with LRPPRC interacting with XPO1 to form an EIF4E-dependent mRNA export complex. Alters the composition of the cytoplasmic face of the nuclear pore to promote RNA export by reducing RANBP2 expression, relocalizing nucleoporin NUP214 and increasing expression of RANBP1 and RNA export factors DDX19 and GLE1. Promotes the nuclear export of cyclin CCND1 mRNA. Promotes the nuclear export of NOS2/iNOS mRNA. Promotes the nuclear export of MDM2 mRNA. Promotes the export of additional mRNAs, including others involved in the cell cycle. In the nucleus, binds to capped splice factor-encoding mRNAs and stimulates their nuclear export to enhance splice factor production by increasing their cytoplasmic availability to the translation machinery. May also regulate splicing through interaction with the spliceosome in an RNA and m7G cap-dependent manner. Also binds to some pre-mRNAs and may play a role in their recruitment to the spliceosome. Promotes steady-state capping of a subset of coding and non-coding RNAs by mediating nuclear export of capping machinery mRNAs including RNMT, RNGTT and RAMAC to enhance their translation. Stimulates mRNA 3'-end processing by promoting the expression of several core cleavage complex factors required for mRNA cleavage and polyadenylation, and may also have a direct effect through its interaction with the CPSF3 cleavage enzyme. Rescues cells from apoptosis by promoting activation of serine/threonine-protein kinase AKT1 through mRNA export of NBS1 which potentiates AKT1 phosphorylation and also through mRNA export of AKT1 effectors, allowing for increased production of these proteins. The chain is Eukaryotic translation initiation factor 4E from Homo sapiens (Human).